We begin with the raw amino-acid sequence, 392 residues long: Chaperone protein DnaJ (392 aa).

In terms of domain architecture, J spans 2–67; it reads DYYDVLGVSK…QKRESYDRYG (66 aa). A CR-type zinc finger spans residues 149–227; sequence GVEKELLVSG…CRGQGRIKDK (79 aa). Zn(2+) is bound by residues Cys-162, Cys-165, Cys-179, Cys-182, Cys-201, Cys-204, Cys-215, and Cys-218. CXXCXGXG motif repeat units lie at residues 162–169, 179–186, 201–208, and 215–222; these read CETCLGSG, CDRCKGSG, CPECGGEG, and CSNCRGQG.

This sequence belongs to the DnaJ family. As to quaternary structure, homodimer. Requires Zn(2+) as cofactor.

It is found in the cytoplasm. Its function is as follows. Participates actively in the response to hyperosmotic and heat shock by preventing the aggregation of stress-denatured proteins and by disaggregating proteins, also in an autonomous, DnaK-independent fashion. Unfolded proteins bind initially to DnaJ; upon interaction with the DnaJ-bound protein, DnaK hydrolyzes its bound ATP, resulting in the formation of a stable complex. GrpE releases ADP from DnaK; ATP binding to DnaK triggers the release of the substrate protein, thus completing the reaction cycle. Several rounds of ATP-dependent interactions between DnaJ, DnaK and GrpE are required for fully efficient folding. Also involved, together with DnaK and GrpE, in the DNA replication of plasmids through activation of initiation proteins. This chain is Chaperone protein DnaJ, found in Chlamydia caviae (strain ATCC VR-813 / DSM 19441 / 03DC25 / GPIC) (Chlamydophila caviae).